The chain runs to 107 residues: uncharacterized protein (107 aa).

This is an uncharacterized protein from Acanthamoeba polyphaga mimivirus (APMV).